The sequence spans 450 residues: Putative gustatory receptor 28a (450 aa).

The Cytoplasmic portion of the chain corresponds to 1–47 (MAFKLWERFSQADNVFQALRPLTFISLLGLAPFRLNLNPRKEVQTSK). Residues 48 to 68 (FSFFAGIVHFLFFVLCFGISV) form a helical membrane-spanning segment. Residues 69 to 87 (KEGDSIIGYFFQTNITRFS) are Extracellular-facing. Asn82 carries N-linked (GlcNAc...) asparagine glycosylation. Residues 88–108 (DGTLRLTGILAMSTIFGFAMF) traverse the membrane as a helical segment. At 109–138 (KRQRLVSIIQNNIVVDEIFVRLGMKLDYRR) the chain is on the cytoplasmic side. A helical membrane pass occupies residues 139–159 (ILLSSFLISLGMLLFNVIYLC). Residues 160–171 (VSYSLLVSATIS) lie on the Extracellular side of the membrane. The chain crosses the membrane as a helical span at residues 172–192 (PSFVTFTTFALPHINISLMVF). Residues 193 to 292 (KFLCTTDLAR…CQTIEEYFTY (100 aa)) lie on the Cytoplasmic side of the membrane. The helical transmembrane segment at 293-313 (PLLGIIAISFLFILFDDFYIL) threads the bilayer. Residues 314 to 329 (EAILNPKRLDVFEADE) lie on the Extracellular side of the membrane. A helical membrane pass occupies residues 330–350 (FFAFFLMQLIWYIVIIVLIVE). Over 351 to 407 (GSSRTILHSSYTAAIVHKILNITDDPELRDRLFRLSLQLSHRKVLFTAAGLFRLDRT) the chain is Cytoplasmic. A helical transmembrane segment spans residues 408–424 (LIFTITGAATCYLIILI). Topologically, residues 425–450 (QFRFTHHMDDTSSNSTNNLHSIHLGD) are extracellular. Residue Asn438 is glycosylated (N-linked (GlcNAc...) asparagine).

This sequence belongs to the insect chemoreceptor superfamily. Gustatory receptor (GR) family. Gr2a subfamily. As to expression, in addition to expression in a large number of taste neurons, Gr28a is also expressed in a few nonchemosensory neurons, including the campaniform sensilla of the wing, leg stretch receptors, and multiple dendritic (MD) neurons in the abdomen. In larvea, is expressed in neurons of the terminal external chemosensory organ, the dorsal external chemosensory organ, as well as in the ventral and posterior pharyngeal sense organ.

The protein localises to the cell membrane. Probable gustatory receptor which mediates acceptance or avoidance behavior, depending on its substrates. Atypical expression also suggests nongustatory roles in the nervous system and tissues involved in proprioception, hygroreception, and other sensory modalities. It is also possible that it has chemosensory roles in the detection of internal ligands. This is Putative gustatory receptor 28a (Gr28a) from Drosophila melanogaster (Fruit fly).